Here is a 332-residue protein sequence, read N- to C-terminus: Probable xyloglucan endotransglucosylase/hydrolase protein 28 (332 aa).

The N-terminal stretch at Met1 to Ala22 is a signal peptide. The 201-residue stretch at Leu23–Phe223 folds into the GH16 domain. The active-site Nucleophile is Glu108. Glu112 (proton donor) is an active-site residue. Xyloglucan contacts are provided by residues Glu112 and Gln125–Asn127. Asn131 carries an N-linked (GlcNAc...) asparagine glycan. Residues His135–Glu139, Lys202–Trp203, Gly207, and Arg282 contribute to the xyloglucan site. The cysteines at positions 277 and 290 are disulfide-linked. Residues His313–Leu326 are compositionally biased toward basic residues. A disordered region spans residues His313–Ile332.

Belongs to the glycosyl hydrolase 16 family. XTH group 3 subfamily. Post-translationally, contains at least one intrachain disulfide bond essential for its enzymatic activity. Expressed in 7 day old seedlings, roots, rosette leaves, internodes between nodes bearing axillary shoots, nodes bearing flowers, flower buds and siliques.

It is found in the secreted. It localises to the cell wall. The protein localises to the extracellular space. The protein resides in the apoplast. The enzyme catalyses breaks a beta-(1-&gt;4) bond in the backbone of a xyloglucan and transfers the xyloglucanyl segment on to O-4 of the non-reducing terminal glucose residue of an acceptor, which can be a xyloglucan or an oligosaccharide of xyloglucan.. Functionally, catalyzes xyloglucan endohydrolysis (XEH) and/or endotransglycosylation (XET). Cleaves and religates xyloglucan polymers, an essential constituent of the primary cell wall, and thereby participates in cell wall construction of growing tissues. The sequence is that of Probable xyloglucan endotransglucosylase/hydrolase protein 28 (XTH28) from Arabidopsis thaliana (Mouse-ear cress).